The following is a 459-amino-acid chain: MGSQATTYHMAMYPWFGVGHLTGFFRLANKLAGKGHRISFLIPKNTQSKLESFNLHPHLISFVPIVVPSIPGLPPGAETTSDVPFPSTHLLMEAMDKTQNDIEIILKDLKVDVVFYDFTHWLPSLARKIGIKSVFYSTISPLMHGYALSPERRVVGKQLTEADMMKAPASFPDPSIKLHAHEARGFTARTVMKFGGDITFFDRIFTAVSESDGLAYSTCREIEGQFCDYIETQFQKPVLLAGPALPVPSKSTMEQKWSDWLGKFKEGSVIYCAFGSECTLRKDKFQELLWGLELTGMPFFAALKPPFEAESIEAAIPEELKEKIQGRGIVHGEWVQQQLFLQHPSVGCFVSHCGWASLSEALVNDCQIVLLPQVGDQIINARIMSVSLKVGVEVEKGEEDGVFSRESVCKAVKAVMDEKSEIGREVRGNHDKLRGFLLNADLDSKYMDSFNQKLQDLLG.

Catalysis depends on His20, which acts as the Proton acceptor. Position 20 (His20) interacts with an anthocyanidin. Asp117 functions as the Charge relay in the catalytic mechanism. Positions 138, 335, 337, 352, 355, 357, and 360 each coordinate UDP-alpha-D-glucose. Gly375 is an an anthocyanidin binding site. Residues Asp376 and Gln377 each contribute to the UDP-alpha-D-glucose site.

This sequence belongs to the UDP-glycosyltransferase family. In terms of tissue distribution, mainly expressed in the petals and tubes of flower buds at around 24 hours before flower opening.

The catalysed reaction is an anthocyanidin 3-O-beta-D-glucoside + UDP-alpha-D-glucose = an anthocyanidin 3-O-sophoroside + UDP + 2 H(+). The protein operates within pigment biosynthesis; anthocyanin biosynthesis. Glycosyltransferase that mediates the glucosylation of anthocyanidin 3-O-glucosides to yield anthocyanidin 3-O-sophorosides. 3-O-sophoroside derivatives are required for the bright blue or red color of flowers. The chain is Anthocyanidin 3-O-glucoside 2''-O-glucosyltransferase (3GGT) from Ipomoea nil (Japanese morning glory).